The chain runs to 110 residues: Large ribosomal subunit protein uL22 (110 aa).

This sequence belongs to the universal ribosomal protein uL22 family. As to quaternary structure, part of the 50S ribosomal subunit.

Its function is as follows. This protein binds specifically to 23S rRNA; its binding is stimulated by other ribosomal proteins, e.g. L4, L17, and L20. It is important during the early stages of 50S assembly. It makes multiple contacts with different domains of the 23S rRNA in the assembled 50S subunit and ribosome. The globular domain of the protein is located near the polypeptide exit tunnel on the outside of the subunit, while an extended beta-hairpin is found that lines the wall of the exit tunnel in the center of the 70S ribosome. The protein is Large ribosomal subunit protein uL22 of Exiguobacterium sp. (strain ATCC BAA-1283 / AT1b).